Here is a 253-residue protein sequence, read N- to C-terminus: Proteasome subunit alpha (253 aa).

The interval 229–253 is disordered; the sequence is ADESQSYIDDIEDAADDSDDDDDEE. A compositionally biased stretch (acidic residues) spans 237–253; the sequence is DDIEDAADDSDDDDDEE.

Belongs to the peptidase T1A family. In terms of assembly, the 20S proteasome core is composed of 14 alpha and 14 beta subunits that assemble into four stacked heptameric rings, resulting in a barrel-shaped structure. The two inner rings, each composed of seven catalytic beta subunits, are sandwiched by two outer rings, each composed of seven alpha subunits. The catalytic chamber with the active sites is on the inside of the barrel. Has a gated structure, the ends of the cylinder being occluded by the N-termini of the alpha-subunits. Is capped at one or both ends by the proteasome regulatory ATPase, PAN.

It localises to the cytoplasm. The formation of the proteasomal ATPase PAN-20S proteasome complex, via the docking of the C-termini of PAN into the intersubunit pockets in the alpha-rings, triggers opening of the gate for substrate entry. Interconversion between the open-gate and close-gate conformations leads to a dynamic regulation of the 20S proteasome proteolysis activity. Its function is as follows. Component of the proteasome core, a large protease complex with broad specificity involved in protein degradation. This chain is Proteasome subunit alpha, found in Halobacterium salinarum (strain ATCC 29341 / DSM 671 / R1).